The sequence spans 64 residues: Large ribosomal subunit protein bL35 (64 aa).

Positions 1–27 (MPKMKTKSGAKKRFKPTASGFKHKHAF) are disordered.

It belongs to the bacterial ribosomal protein bL35 family.

The chain is Large ribosomal subunit protein bL35 from Azotobacter vinelandii (strain DJ / ATCC BAA-1303).